The sequence spans 160 residues: Phosphopantetheine adenylyltransferase (160 aa).

Thr10 provides a ligand contact to substrate. ATP is bound by residues 10-11 and His18; that span reads TF. Residues Lys42, Met74, and Arg88 each contribute to the substrate site. ATP is bound by residues 89–91, Glu99, and 124–130; these read GLR and LSFLSSS.

The protein belongs to the bacterial CoaD family. As to quaternary structure, homohexamer. Requires Mg(2+) as cofactor.

It localises to the cytoplasm. The enzyme catalyses (R)-4'-phosphopantetheine + ATP + H(+) = 3'-dephospho-CoA + diphosphate. It functions in the pathway cofactor biosynthesis; coenzyme A biosynthesis; CoA from (R)-pantothenate: step 4/5. In terms of biological role, reversibly transfers an adenylyl group from ATP to 4'-phosphopantetheine, yielding dephospho-CoA (dPCoA) and pyrophosphate. The chain is Phosphopantetheine adenylyltransferase from Photorhabdus laumondii subsp. laumondii (strain DSM 15139 / CIP 105565 / TT01) (Photorhabdus luminescens subsp. laumondii).